Here is a 281-residue protein sequence, read N- to C-terminus: Digeranylgeranylglyceryl phosphate synthase (281 aa).

8 helical membrane passes run 7–27 (ILRPVNAVMAVITVMLMALIT), 32–52 (FSVLLASVVVFTATGAGNVIN), 72–91 (GRISRGVAGVYSIILFALAS), 95–117 (FYLGLLPGLVVVSSSLLMVYYAW), 128–148 (ITISFLTGLSFVFGGIVLGEV), 193–213 (ISGVLAASFMLIASLTSPSLY), 214–234 (LLGIFSALYIPVLLLAVAVFL), and 258–278 (VGMALTFIAFAAGSGTITALT).

The protein belongs to the UbiA prenyltransferase family. DGGGP synthase subfamily. Requires Mg(2+) as cofactor.

It localises to the cell membrane. It carries out the reaction sn-3-O-(geranylgeranyl)glycerol 1-phosphate + (2E,6E,10E)-geranylgeranyl diphosphate = 2,3-bis-O-(geranylgeranyl)-sn-glycerol 1-phosphate + diphosphate. It functions in the pathway membrane lipid metabolism; glycerophospholipid metabolism. Functionally, prenyltransferase that catalyzes the transfer of the geranylgeranyl moiety of geranylgeranyl diphosphate (GGPP) to the C2 hydroxyl of (S)-3-O-geranylgeranylglyceryl phosphate (GGGP). This reaction is the second ether-bond-formation step in the biosynthesis of archaeal membrane lipids. The sequence is that of Digeranylgeranylglyceryl phosphate synthase from Methanothermobacter thermautotrophicus (strain ATCC 29096 / DSM 1053 / JCM 10044 / NBRC 100330 / Delta H) (Methanobacterium thermoautotrophicum).